Reading from the N-terminus, the 148-residue chain is Cytochrome c-type biogenesis protein CcmE (148 aa).

Topologically, residues 1–7 (MKPRSKR) are cytoplasmic. A helical; Signal-anchor for type II membrane protein transmembrane segment spans residues 8-28 (LLLVAGAVALLVGAVALVLNA). Topologically, residues 29–148 (FQQNLVFFHT…AQKAAQTVQQ (120 aa)) are periplasmic. Residues H123 and Y127 each contribute to the heme site.

Belongs to the CcmE/CycJ family.

The protein resides in the cell inner membrane. In terms of biological role, heme chaperone required for the biogenesis of c-type cytochromes. Transiently binds heme delivered by CcmC and transfers the heme to apo-cytochromes in a process facilitated by CcmF and CcmH. The chain is Cytochrome c-type biogenesis protein CcmE from Aromatoleum aromaticum (strain DSM 19018 / LMG 30748 / EbN1) (Azoarcus sp. (strain EbN1)).